The primary structure comprises 128 residues: Large ribosomal subunit protein bL17 (128 aa).

The protein belongs to the bacterial ribosomal protein bL17 family. As to quaternary structure, part of the 50S ribosomal subunit. Contacts protein L32.

The sequence is that of Large ribosomal subunit protein bL17 from Streptococcus uberis (strain ATCC BAA-854 / 0140J).